Reading from the N-terminus, the 621-residue chain is Chaperone protein HtpG (621 aa).

The a; substrate-binding stretch occupies residues 1–328; the sequence is MTQEKKKFDA…SEDLPLNISR (328 aa). The segment at 329-544 is b; it reads ESLQHNNVLE…DTAMDIRMER (216 aa). Residues 545-621 are c; that stretch reads FLIEQKQIAN…LNDILQKAIL (77 aa).

Belongs to the heat shock protein 90 family. As to quaternary structure, homodimer.

Its subcellular location is the cytoplasm. Its function is as follows. Molecular chaperone. Has ATPase activity. The protein is Chaperone protein HtpG of Rickettsia prowazekii (strain Madrid E).